The following is a 352-amino-acid chain: Extracellular minor metalloprotease (352 aa).

Disordered stretches follow at residues 41–86 (GNKP…QPRR) and 144–164 (TARS…ELTH). Basic and acidic residues predominate over residues 48–57 (PTEKNARAGE). Composition is skewed to low complexity over residues 71–85 (ARQT…QQPR) and 144–156 (TARS…SPST). His-160 provides a ligand contact to Zn(2+). Glu-161 is a catalytic residue. Positions 164 and 184 each coordinate Zn(2+). The active-site Proton donor is the His-262. The tract at residues 303–325 (TPTSDHLRPRHGETRAGLRTKRG) is disordered. Over residues 304–325 (PTSDHLRPRHGETRAGLRTKRG) the composition is skewed to basic and acidic residues.

Belongs to the peptidase M4 family. The cofactor is Zn(2+).

Its subcellular location is the secreted. This Serratia marcescens (strain ATCC 21074 / E-15) protein is Extracellular minor metalloprotease (smp).